The primary structure comprises 337 residues: Cysteinyl leukotriene receptor 1 (337 aa).

Over 1–28 the chain is Extracellular; sequence MDETGNLTVSSATCHDTIDDFRNQVYST. A glycan (N-linked (GlcNAc...) asparagine) is linked at N6. A helical transmembrane segment spans residues 29 to 49; sequence LYSMISVVGFFGNGFVLYVLI. The Cytoplasmic portion of the chain corresponds to 50–57; that stretch reads KTYHKKSA. A helical transmembrane segment spans residues 58–78; the sequence is FQVYMINLAVADLLCVCTLPL. Over 79-106 the chain is Extracellular; the sequence is RVVYYVHKGIWLFGDFLCRLSTYALYVN. Cysteines 96 and 173 form a disulfide. Residues 107-127 form a helical membrane-spanning segment; the sequence is LYCSIFFMTAMSFFRCIAIVF. Residues 128–141 lie on the Cytoplasmic side of the membrane; the sequence is PVQNINLVTQKKAR. A helical membrane pass occupies residues 142–162; it reads FVCVGIWIFVILTSSPFLMAK. The Extracellular segment spans residues 163-193; sequence PQKDEKNNTKCFEPPQDNQTKNHVLVLHYVS. 2 N-linked (GlcNAc...) asparagine glycosylation sites follow: N169 and N180. Residues 194-214 traverse the membrane as a helical segment; that stretch reads LFVGFIIPFVIIIVCYTMIIL. Residues 215-230 lie on the Cytoplasmic side of the membrane; that stretch reads TLLKKSMKKNLSSHKK. A helical transmembrane segment spans residues 231–251; that stretch reads AIGMIMVVTAAFLVSFMPYHI. The Extracellular portion of the chain corresponds to 252–276; sequence QRTIHLHFLHNETKPCDSVLRMQKS. N262 carries an N-linked (GlcNAc...) asparagine glycan. Residues 277–297 traverse the membrane as a helical segment; it reads VVITLSLAASNCCFDPLLYFF. The Cytoplasmic segment spans residues 298 to 337; that stretch reads SGGNFRKRLSTFRKHSLSSVTYVPRKKASLPEKGEEICKV.

Belongs to the G-protein coupled receptor 1 family. Widely expressed, with highest levels in spleen and peripheral blood leukocytes. Lower expression in several tissues, such as lung (mostly in smooth muscle bundles and alveolar macrophages), placenta, small intestine, pancreas, colon and heart.

It localises to the cell membrane. Functionally, receptor for cysteinyl leukotrienes mediating bronchoconstriction of individuals with and without asthma. Stimulation by LTD4 results in the contraction and proliferation of smooth muscle, edema, eosinophil migration and damage to the mucus layer in the lung. This response is mediated via a G-protein that activates a phosphatidylinositol-calcium second messenger system. The rank order of affinities for the leukotrienes is LTD4 &gt;&gt; LTE4 = LTC4 &gt;&gt; LTB4. The protein is Cysteinyl leukotriene receptor 1 (CYSLTR1) of Homo sapiens (Human).